The following is a 524-amino-acid chain: Casein kinase I homolog 3 (524 aa).

Residues 14–319 (YAVGPKIGEG…YLISLMDDAL (306 aa)) form the Protein kinase domain. Residues 20 to 28 (IGEGSFGVI) and lysine 60 contribute to the ATP site. Residue aspartate 150 is the Proton acceptor of the active site. Disordered stretches follow at residues 352–414 (HGYG…KQQH) and 427–474 (PETH…EHNL). Positions 360-373 (RVNGNTARNNVNTN) are enriched in low complexity. 2 stretches are compositionally biased toward polar residues: residues 374–413 (SKTRNTTPVATPKQQAQNSYNKDNSKSRISSNPQSFTKQQ) and 429–474 (THSN…EHNL). The YXXZ targeting signal signature appears at 444 to 447 (YDSI). S-palmitoyl cysteine attachment occurs at residues cysteine 517, cysteine 518, cysteine 519, cysteine 520, cysteine 522, cysteine 523, and cysteine 524.

This sequence belongs to the protein kinase superfamily. CK1 Ser/Thr protein kinase family. Casein kinase I subfamily.

It is found in the cell membrane. The protein localises to the nucleus membrane. Its subcellular location is the vacuole membrane. It carries out the reaction L-seryl-[protein] + ATP = O-phospho-L-seryl-[protein] + ADP + H(+). It catalyses the reaction L-threonyl-[protein] + ATP = O-phospho-L-threonyl-[protein] + ADP + H(+). Its function is as follows. Casein kinases are operationally defined by their preferential utilization of acidic proteins such as caseins as substrates. Phosphorylates MON1, inhibiting the guanine nucleotide exchange factor activity of the MON1-CCZ1 complex, possibly by preventing its recruitment to membranes by small GTPase RAB5 homologs. The polypeptide is Casein kinase I homolog 3 (YCK3) (Saccharomyces cerevisiae (strain ATCC 204508 / S288c) (Baker's yeast)).